The primary structure comprises 136 residues: Salivary protein 15 Iric-2 (136 aa).

Positions 1–22 (MESFVAMKVVCIVLLFVIAAEA) are cleaved as a signal peptide. Residue N105 is glycosylated (N-linked (GlcNAc...) asparagine). The CD4-binding stretch occupies residues 117–136 (GPKNQTCENKDQCVPHIPGC).

It belongs to the salp15 family. As to quaternary structure, interacts with host CD4. Interacts with host DC-SIGN (CD209). Interacts with Borrelia outer surface protein C (OspC). As to expression, expressed in salivary glands. Detected in fed adult female.

Its subcellular location is the secreted. In terms of biological role, salivary tick protein that downregulates host immune system by binding to both dendritic cells, and CD4(+) T cells. Specifically binds to the CD4 coreceptor on T cells. This interaction prevents the activation of the Src kinase, Lck, and its downstream substrate Zap-70, and results in deficient activation of PLCgamma1, the repression of calcium fluxes triggered by T-cell antigen receptor (TCR) ligation, and a subsequent reduction in interleukin-2 production. This salivary protein also binds to DC-SIGN (CD209) on dendritic cells (DC) and activates the Raf-1 kinase/MEK signaling pathway that results in down-regulating expression of pro-inflammatory cytokines. Furthermore, it inhibits T cell proliferation induced by DCs. In addition, it inhibits in vitro keratinocyte inflammation induced by Borrelia burgdorferi or by the major outer surface protein (OspC) of Borrelia. In addition, it downregulates chemokines and monocyte chemoattractant protein 1, as well as several antimicrobial peptides such as defensins, cathelicidin, psoriasin, and RNase 7. Apart from its immunomodulatory activities, it is also associated with protection of Borrelia spirochetes from antibody-mediated killing through its binding to OspC. In vivo, tests on different immune disease animal models show promising therapeutic results, e.g., in inhibiting HIV infection, experimental autoimmune encephalomyelitis, transplantation rejection, and asthma. The sequence is that of Salivary protein 15 Iric-2 from Ixodes ricinus (Common tick).